A 458-amino-acid chain; its full sequence is ATP synthase subunit beta (458 aa).

148 to 155 is a binding site for ATP; sequence GGAGVGKT.

The protein belongs to the ATPase alpha/beta chains family. As to quaternary structure, F-type ATPases have 2 components, CF(1) - the catalytic core - and CF(0) - the membrane proton channel. CF(1) has five subunits: alpha(3), beta(3), gamma(1), delta(1), epsilon(1). CF(0) has three main subunits: a(1), b(2) and c(9-12). The alpha and beta chains form an alternating ring which encloses part of the gamma chain. CF(1) is attached to CF(0) by a central stalk formed by the gamma and epsilon chains, while a peripheral stalk is formed by the delta and b chains.

Its subcellular location is the cell inner membrane. The catalysed reaction is ATP + H2O + 4 H(+)(in) = ADP + phosphate + 5 H(+)(out). Its function is as follows. Produces ATP from ADP in the presence of a proton gradient across the membrane. The catalytic sites are hosted primarily by the beta subunits. The protein is ATP synthase subunit beta of Shewanella halifaxensis (strain HAW-EB4).